The primary structure comprises 1259 residues: Receptor tyrosine-protein kinase erbB-2 (1259 aa).

Residues 1–22 (MELAAWCRWGLLLALLPSGAAG) form the signal peptide. Over 23-653 (TQVCTGTDMK…EQRASPVTSI (631 aa)) the chain is Extracellular. An intrachain disulfide couples C26 to C53. N68 carries N-linked (GlcNAc...) asparagine glycosylation. 13 disulfides stabilise this stretch: C162–C192, C195–C204, C199–C212, C220–C227, C224–C235, C236–C244, C240–C252, C255–C264, C268–C295, C299–C311, C315–C331, C334–C338, and C342–C367. Position 182 is a phosphothreonine (T182). Residue N259 is glycosylated (N-linked (GlcNAc...) asparagine). A glycan (N-linked (GlcNAc...) asparagine) is linked at N421. 3 cysteine pairs are disulfide-bonded: C475-C504, C511-C519, and C514-C527. N529 carries an N-linked (GlcNAc...) asparagine glycan. Intrachain disulfides connect C530–C539, C543–C559, C562–C575, C566–C583, C586–C595, C599–C622, C625–C633, and C629–C641. N-linked (GlcNAc...) asparagine glycosylation occurs at N570. An N-linked (GlcNAc...) asparagine glycan is attached at N628. Residues 654–674 (IAAVVGILLAVVVGLVLGILI) form a helical membrane-spanning segment. Residues 675-688 (KRRRQKIRKYTMRR) form a required for interaction with KPNB1 and EEA1 region. Positions 675–688 (KRRRQKIRKYTMRR) match the Nuclear localization signal motif. Residues 675-1259 (KRRRQKIRKY…PEYLGLDVPV (585 aa)) are Cytoplasmic-facing. The 268-residue stretch at 719 to 986 (LRKVKVLGSG…RMARDPQRFV (268 aa)) folds into the Protein kinase domain. Residues 725 to 733 (LGSGAFGTV) and K752 each bind ATP. D844 (proton acceptor) is an active-site residue. Y876 is subject to Phosphotyrosine. Residues 1027 to 1183 (QGFFCPEPTP…PKTLSPGKNG (157 aa)) form a disordered region. 3 positions are modified to phosphoserine: S1077, S1082, and S1106. A Phosphotyrosine modification is found at Y1111. Residue Y1138 is modified to Phosphotyrosine; by autocatalysis. Over residues 1145–1160 (WPQPPLALEGPLPPSR) the composition is skewed to pro residues. T1165 is subject to Phosphothreonine. Residues 1199–1201 (EYL) are interaction with PIK3C2B. A Phosphotyrosine modification is found at Y1200. The tract at residues 1203-1259 (PRGRAAPQPHPPPAFSPAFDNLYYWDQDPSERGSPPSTFEGTPTAENPEYLGLDVPV) is disordered. Residues 1237–1247 (PPSTFEGTPTA) show a composition bias toward polar residues. Position 1252 is a phosphotyrosine; by autocatalysis (Y1252).

This sequence belongs to the protein kinase superfamily. Tyr protein kinase family. EGF receptor subfamily. As to quaternary structure, homodimer. Heterodimer with EGFR, ERBB3 and ERBB4. Part of a complex with EGFR and either PIK3C2A or PIK3C2B. May interact with PIK3C2B when phosphorylated on Tyr-1200. Interacts with PRKCABP and PLXNB1. Interacts (when phosphorylated on Tyr-1252) with MEMO1. Interacts with MUC1. Interacts (when phosphorylated on Tyr-1138) with GRB7 (via SH2 domain). Interacts (when phosphorylated on Tyr-1252) with ERBIN. Interacts with SRC, KPNB1, PTK6, RANBP2, EEA1, CRM1, CLTC, RPA194, MYOC and ACTB. Interacts (preferentially with the tyrosine phosphorylated form) with CPNE3; this interaction occurs at the cell membrane and is increased in a growth factor heregulin-dependent manner. Interacts with HSP90AA1 and HSP90AB1 in an ATP-dependent manner; the interaction suppresses ERBB2 kinase activity. Interacts with SORL1; this interaction regulates ERBB2 subcellular distribution by promoting its recycling after internalization from endosomes back to the plasma membrane, hence stimulates ERBB2-mediated signaling. Interacts with SH3BGRL. Interacts with ROR1. In terms of processing, autophosphorylated. Autophosphorylation occurs in trans, i.e. one subunit of the dimeric receptor phosphorylates tyrosine residues on the other subunit. Ligand-binding increases phosphorylation on tyrosine residues. Signaling via SEMA4C promotes phosphorylation at Tyr-1252. Dephosphorylated by PTPN12.

The protein resides in the cell membrane. It localises to the cell projection. Its subcellular location is the ruffle membrane. The protein localises to the early endosome. It is found in the cytoplasm. The protein resides in the perinuclear region. It localises to the nucleus. The enzyme catalyses L-tyrosyl-[protein] + ATP = O-phospho-L-tyrosyl-[protein] + ADP + H(+). Functionally, protein tyrosine kinase that is part of several cell surface receptor complexes, but that apparently needs a coreceptor for ligand binding. Essential component of a neuregulin-receptor complex, although neuregulins do not interact with it alone. GP30 is a potential ligand for this receptor. Regulates outgrowth and stabilization of peripheral microtubules (MTs). Upon ERBB2 activation, the MEMO1-RHOA-DIAPH1 signaling pathway elicits the phosphorylation and thus the inhibition of GSK3B at cell membrane. This prevents the phosphorylation of APC and CLASP2, allowing its association with the cell membrane. In turn, membrane-bound APC allows the localization of MACF1 to the cell membrane, which is required for microtubule capture and stabilization. In the nucleus is involved in transcriptional regulation. Associates with the 5'-TCAAATTC-3' sequence in the PTGS2/COX-2 promoter and activates its transcription. Implicated in transcriptional activation of CDKN1A; the function involves STAT3 and SRC. Involved in the transcription of rRNA genes by RNA Pol I and enhances protein synthesis and cell growth. In Canis lupus familiaris (Dog), this protein is Receptor tyrosine-protein kinase erbB-2 (ERBB2).